The primary structure comprises 316 residues: Long form salivary protein D7L1 (316 aa).

Positions 1–23 are cleaved as a signal peptide; sequence MSHTRAVVLAVACLCLILVQVEG. Cystine bridges form between cysteine 40/cysteine 76, cysteine 72/cysteine 131, cysteine 181/cysteine 214, and cysteine 255/cysteine 266.

The protein belongs to the PBP/GOBP family.

It is found in the secreted. Functionally, modulates blood feeding of female mosquitoes on vertebrate species by binding and sequestering different mediators involved in the host response, such as biogenic amines and eicosanoids. Binds serotonin, tryptamine, histamine, leukotriene C4, leukotriene D4 and leukotriene E4. Does not bind octopamine, dopamine, noradrenaline, adrenaline and prostaglandin PGF2alpha. In Anopheles atroparvus (European mosquito), this protein is Long form salivary protein D7L1.